We begin with the raw amino-acid sequence, 462 residues long: Chromosomal replication initiator protein DnaA (462 aa).

The interval 1-83 (MSLSLWQQCL…LRFEVGSKPA (83 aa)) is domain I, interacts with DnaA modulators. The segment at 83 to 125 (AVRAHSHPVTASVSAPVAPVTRSAPVRPSWDSSPAQPELSYRS) is domain II. The segment at 105–127 (SAPVRPSWDSSPAQPELSYRSNV) is disordered. The segment covering 112–127 (WDSSPAQPELSYRSNV) has biased composition (polar residues). Residues 126–342 (NVNPKHTFDN…GALNRVIANA (217 aa)) form a domain III, AAA+ region region. Residues glycine 170, glycine 172, lysine 173, and threonine 174 each coordinate ATP. The domain IV, binds dsDNA stretch occupies residues 343–462 (NFTGRAITID…FSNLIRTLSS (120 aa)).

The protein belongs to the DnaA family. As to quaternary structure, oligomerizes as a right-handed, spiral filament on DNA at oriC.

It localises to the cytoplasm. In terms of biological role, plays an essential role in the initiation and regulation of chromosomal replication. ATP-DnaA binds to the origin of replication (oriC) to initiate formation of the DNA replication initiation complex once per cell cycle. Binds the DnaA box (a 9 base pair repeat at the origin) and separates the double-stranded (ds)DNA. Forms a right-handed helical filament on oriC DNA; dsDNA binds to the exterior of the filament while single-stranded (ss)DNA is stabiized in the filament's interior. The ATP-DnaA-oriC complex binds and stabilizes one strand of the AT-rich DNA unwinding element (DUE), permitting loading of DNA polymerase. After initiation quickly degrades to an ADP-DnaA complex that is not apt for DNA replication. Binds acidic phospholipids. In Yersinia enterocolitica serotype O:8 / biotype 1B (strain NCTC 13174 / 8081), this protein is Chromosomal replication initiator protein DnaA.